The chain runs to 475 residues: Probable UDP-N-acetylglucosamine pyrophosphorylase (475 aa).

Positions 103–106 (LAGG) match the Substrate binding motif. UTP contacts are provided by residues 103 to 106 (LAGG), Lys117, Gln194, and Gly220. Asn221 is a substrate binding site. Asp251 lines the UTP pocket. The short motif at 301–302 (EY) is the Substrate binding element. Position 378 (Lys378) interacts with UTP. Ser405 carries the phosphoserine modification. Lys410 provides a ligand contact to substrate.

Belongs to the UDPGP type 1 family.

The protein localises to the cytoplasm. It localises to the nucleus. The catalysed reaction is N-acetyl-alpha-D-glucosamine 1-phosphate + UTP + H(+) = UDP-N-acetyl-alpha-D-glucosamine + diphosphate. The protein operates within nucleotide-sugar biosynthesis; UDP-N-acetyl-alpha-D-glucosamine biosynthesis; UDP-N-acetyl-alpha-D-glucosamine from N-acetyl-alpha-D-glucosamine 1-phosphate: step 1/1. The protein is Probable UDP-N-acetylglucosamine pyrophosphorylase (uap1) of Schizosaccharomyces pombe (strain 972 / ATCC 24843) (Fission yeast).